The chain runs to 331 residues: tRNA N6-adenosine threonylcarbamoyltransferase (331 aa).

Residues H109, H113, and Y130 each contribute to the Fe cation site. Substrate contacts are provided by residues 130 to 134 (YLSGG), D162, D183, and S262. D290 is a binding site for Fe cation.

Belongs to the KAE1 / TsaD family. Requires Fe(2+) as cofactor.

It localises to the cytoplasm. The enzyme catalyses L-threonylcarbamoyladenylate + adenosine(37) in tRNA = N(6)-L-threonylcarbamoyladenosine(37) in tRNA + AMP + H(+). Functionally, required for the formation of a threonylcarbamoyl group on adenosine at position 37 (t(6)A37) in tRNAs that read codons beginning with adenine. Is probably involved in the transfer of the threonylcarbamoyl moiety of threonylcarbamoyl-AMP (TC-AMP) to the N6 group of A37. This is tRNA N6-adenosine threonylcarbamoyltransferase from Metallosphaera sedula (strain ATCC 51363 / DSM 5348 / JCM 9185 / NBRC 15509 / TH2).